Consider the following 1016-residue polypeptide: KN motif and ankyrin repeat domain-containing protein 4 (1016 aa).

6 disordered regions span residues 1 to 26 (MEKIDGKDQSSQGDEEKEPPKSYPYS), 70 to 91 (PRNFSLPNSGDRTYAVPPQQNW), 235 to 259 (AEPEEGDLKASSHLSQPGPSSAVQS), 401 to 485 (LSQE…LPRG), 506 to 563 (EEGS…SPQD), and 622 to 755 (AQAP…VSHL). Polar residues-rich tracts occupy residues 70–80 (PRNFSLPNSGD) and 246–258 (SHLSQPGPSSAVQ). A coiled-coil region spans residues 346–409 (SSLKNQVLAL…KLSQERASEA (64 aa)). Basic and acidic residues-rich tracts occupy residues 401–414 (LSQERASEAPDRTD) and 445–454 (PECRAPRAEK). A compositionally biased stretch (polar residues) spans 460–469 (VQNNHKQSYP). Residues 632-650 (TPAPPPSTPPPPPPPPPEI) show a composition bias toward pro residues. Residue threonine 639 is modified to Phosphothreonine. The span at 695–708 (TSGEDSSPEDLSDS) shows a compositional bias: acidic residues. Composition is skewed to basic and acidic residues over residues 709 to 727 (ETEKKQDCSESREDRDLHP) and 745 to 755 (TSDRGEEVSHL). 5 ANK repeats span residues 838–868 (SGNTALHYSVSHSNFAIVKLLLDTGVCNVDH), 877–905 (VMITPLASAETKEDMAVVWKLLREGNVNI), 910–939 (GGQTALMLGVSHDREDMVQALLSCQADVNL), 943–973 (DGSSALMLACHQGNADLVRLLLAHPACNSSL), and 977–1007 (AGRTALSLVLNSPAHVEIAELLRAHSEPGRS).

The protein localises to the cytoplasm. May be involved in the control of cytoskeleton formation by regulating actin polymerization. The chain is KN motif and ankyrin repeat domain-containing protein 4 (Kank4) from Mus musculus (Mouse).